The sequence spans 299 residues: Protoheme IX farnesyltransferase (299 aa).

9 helical membrane passes run 25–45 (VVLL…RAGV), 47–67 (WTVL…AAAV), 95–115 (AAAI…LLLF), 119–139 (LAAW…TGFL), 147–167 (IVIG…AVTG), 173–193 (PLLL…ALAI), 218–238 (VHIL…YAIH), 243–263 (LYLV…WVLY), and 279–299 (IWYL…LLNI).

Belongs to the UbiA prenyltransferase family. Protoheme IX farnesyltransferase subfamily.

The protein localises to the cell inner membrane. It carries out the reaction heme b + (2E,6E)-farnesyl diphosphate + H2O = Fe(II)-heme o + diphosphate. Its pathway is porphyrin-containing compound metabolism; heme O biosynthesis; heme O from protoheme: step 1/1. In terms of biological role, converts heme B (protoheme IX) to heme O by substitution of the vinyl group on carbon 2 of heme B porphyrin ring with a hydroxyethyl farnesyl side group. The protein is Protoheme IX farnesyltransferase of Ectopseudomonas mendocina (strain ymp) (Pseudomonas mendocina).